The primary structure comprises 249 residues: tRNA (guanine-N(1)-)-methyltransferase (249 aa).

Residues glycine 116 and 136-141 (IGDYIL) each bind S-adenosyl-L-methionine.

Belongs to the RNA methyltransferase TrmD family. In terms of assembly, homodimer.

It is found in the cytoplasm. The enzyme catalyses guanosine(37) in tRNA + S-adenosyl-L-methionine = N(1)-methylguanosine(37) in tRNA + S-adenosyl-L-homocysteine + H(+). Its function is as follows. Specifically methylates guanosine-37 in various tRNAs. This is tRNA (guanine-N(1)-)-methyltransferase from Zymomonas mobilis subsp. mobilis (strain ATCC 31821 / ZM4 / CP4).